Here is a 285-residue protein sequence, read N- to C-terminus: Phosphatase YwpJ (285 aa).

Residue Asp7 is the Nucleophile of the active site. Asp7 serves as a coordination point for Mg(2+). Residue Leu8 participates in phosphate binding. Asp9 lines the Mg(2+) pocket. Phosphate is bound by residues 41-42 (TG) and Lys214. Asp237 and Ser238 together coordinate Mg(2+). Residues Asn240 and 282–283 (KH) contribute to the phosphate site.

This sequence belongs to the HAD-like hydrolase superfamily. Cof family. Requires Mg(2+) as cofactor.

Catalyzes the dephosphorylation of phosphorylated 5-6 carbon sugars and monophosphate nucleotides (NMP) in vitro. To a lesser extent, dephosphorylates flavin mononucleotide (FMN) in vitro. In Bacillus subtilis (strain 168), this protein is Phosphatase YwpJ (ywpJ).